The following is a 188-amino-acid chain: Protease-associated domain-containing protein 1 (188 aa).

Positions 1–21 (MSRGAAGWCCLVLWLPTCVAA) are cleaved as a signal peptide. Residues 83–163 (IQDQIALVER…RSLEQHGLPW (81 aa)) enclose the PA domain. N-linked (GlcNAc...) asparagine glycosylation is found at Asn-121 and Asn-171.

In terms of processing, N-glycosylated; required for efficient secretion. Expressed in metabolically active tissues such as liver, muscle, adipose, and heart and different brain regions like cortex and hypothalamus, expression is acutely regulated by the nutritional state.

Its subcellular location is the secreted. Functionally, plays a role in the modulation of physical activity and adiposity. This is Protease-associated domain-containing protein 1 from Mus musculus (Mouse).